A 721-amino-acid chain; its full sequence is Penicillin-binding protein activator LpoA (721 aa).

The signal sequence occupies residues 1–26 (MVPLTFLRTKASRSLPIMLAALIFAG). A lipid anchor (N-palmitoyl cysteine) is attached at C27. C27 carries the S-diacylglycerol cysteine lipid modification. The span at 316–330 (TSDLTSAQAPAQGTM) shows a compositional bias: polar residues. The disordered stretch occupies residues 316-393 (TSDLTSAQAP…PAAQPQAVAA (78 aa)). Low complexity predominate over residues 331-393 (QNPVTAPTTP…PAAQPQAVAA (63 aa)).

It belongs to the LpoA family. In terms of assembly, interacts with PBP1a.

It localises to the cell outer membrane. In terms of biological role, regulator of peptidoglycan synthesis that is essential for the function of penicillin-binding protein 1A (PBP1a). In Enterobacter sp. (strain 638), this protein is Penicillin-binding protein activator LpoA.